The following is a 151-amino-acid chain: Transcriptional repressor NrdR (151 aa).

The segment at 3–34 (CPYCGYEETRVLDSRVDSSGMTVRRRRECVKC) is a zinc-finger region. Residues 49 to 139 (VFVVKKDGKR…VYKDFREIDQ (91 aa)) form the ATP-cone domain.

This sequence belongs to the NrdR family. Requires Zn(2+) as cofactor.

Negatively regulates transcription of bacterial ribonucleotide reductase nrd genes and operons by binding to NrdR-boxes. This is Transcriptional repressor NrdR from Thermosipho melanesiensis (strain DSM 12029 / CIP 104789 / BI429).